We begin with the raw amino-acid sequence, 96 residues long: uncharacterized protein (96 aa).

The [3Fe-4S] cluster site is built by Cys-10, Cys-16, and Cys-55. The disordered stretch occupies residues 67-96 (AGDGERASADPAPSPAEAERHAAKDQHNLG). The segment covering 83 to 96 (EAERHAAKDQHNLG) has biased composition (basic and acidic residues).

The cofactor is [3Fe-4S] cluster.

In terms of biological role, electron transport protein for the cytochrome systems. This is an uncharacterized protein from Bradyrhizobium diazoefficiens (strain JCM 10833 / BCRC 13528 / IAM 13628 / NBRC 14792 / USDA 110).